Consider the following 76-residue polypeptide: Small proline-rich protein 2I (76 aa).

3 repeat units span residues lysine 21–proline 29, proline 30–proline 38, and proline 39–glutamate 47. Positions lysine 21–glutamate 47 are 3 X 9 AA approximate tandem repeats. Over residues lysine 40–serine 53 the composition is skewed to pro residues. A disordered region spans residues lysine 40 to lysine 76.

Belongs to the cornifin (SPRR) family. In terms of tissue distribution, not expressed in uterus.

The protein localises to the cytoplasm. Its function is as follows. Cross-linked envelope protein of keratinocytes. It is a keratinocyte protein that first appears in the cell cytosol, but ultimately becomes cross-linked to membrane proteins by transglutaminase. All that results in the formation of an insoluble envelope beneath the plasma membrane. The protein is Small proline-rich protein 2I (Sprr2i) of Mus musculus (Mouse).